We begin with the raw amino-acid sequence, 404 residues long: Probable ribosomal oxygenase HI_0396 (404 aa).

The JmjC domain maps to 102–231 (ELGQLWNKFG…LIDGISKGFC (130 aa)). Residues His-135, Asp-137, and His-199 each contribute to the Fe cation site.

The protein belongs to the ROX family. Fe(2+) is required as a cofactor.

Functionally, oxygenase that catalyzes the hydroxylation of a ribosomal protein. The sequence is that of Probable ribosomal oxygenase HI_0396 from Haemophilus influenzae (strain ATCC 51907 / DSM 11121 / KW20 / Rd).